We begin with the raw amino-acid sequence, 271 residues long: Imidazole glycerol phosphate synthase subunit HisF (271 aa).

Catalysis depends on residues Asp12 and Asp136.

This sequence belongs to the HisA/HisF family. Heterodimer of HisH and HisF.

It localises to the cytoplasm. The catalysed reaction is 5-[(5-phospho-1-deoxy-D-ribulos-1-ylimino)methylamino]-1-(5-phospho-beta-D-ribosyl)imidazole-4-carboxamide + L-glutamine = D-erythro-1-(imidazol-4-yl)glycerol 3-phosphate + 5-amino-1-(5-phospho-beta-D-ribosyl)imidazole-4-carboxamide + L-glutamate + H(+). The protein operates within amino-acid biosynthesis; L-histidine biosynthesis; L-histidine from 5-phospho-alpha-D-ribose 1-diphosphate: step 5/9. Functionally, IGPS catalyzes the conversion of PRFAR and glutamine to IGP, AICAR and glutamate. The HisF subunit catalyzes the cyclization activity that produces IGP and AICAR from PRFAR using the ammonia provided by the HisH subunit. In Natronomonas pharaonis (strain ATCC 35678 / DSM 2160 / CIP 103997 / JCM 8858 / NBRC 14720 / NCIMB 2260 / Gabara) (Halobacterium pharaonis), this protein is Imidazole glycerol phosphate synthase subunit HisF.